A 436-amino-acid polypeptide reads, in one-letter code: Serine--tRNA ligase (436 aa).

Residue 239-241 participates in L-serine binding; that stretch reads TAE. Position 270–272 (270–272) interacts with ATP; it reads RKE. Glutamate 293 is an L-serine binding site. ATP is bound at residue 357 to 360; sequence EISS. Residue serine 392 participates in L-serine binding.

This sequence belongs to the class-II aminoacyl-tRNA synthetase family. Type-1 seryl-tRNA synthetase subfamily. In terms of assembly, homodimer. The tRNA molecule binds across the dimer.

Its subcellular location is the cytoplasm. The catalysed reaction is tRNA(Ser) + L-serine + ATP = L-seryl-tRNA(Ser) + AMP + diphosphate + H(+). It catalyses the reaction tRNA(Sec) + L-serine + ATP = L-seryl-tRNA(Sec) + AMP + diphosphate + H(+). It participates in aminoacyl-tRNA biosynthesis; selenocysteinyl-tRNA(Sec) biosynthesis; L-seryl-tRNA(Sec) from L-serine and tRNA(Sec): step 1/1. Its function is as follows. Catalyzes the attachment of serine to tRNA(Ser). Is also able to aminoacylate tRNA(Sec) with serine, to form the misacylated tRNA L-seryl-tRNA(Sec), which will be further converted into selenocysteinyl-tRNA(Sec). The polypeptide is Serine--tRNA ligase (Leuconostoc citreum (strain KM20)).